A 441-amino-acid chain; its full sequence is Damage-control phosphatase ARMT1 (441 aa).

At Ala-2 the chain carries N-acetylalanine. N6-acetyllysine is present on Lys-40. The residue at position 102 (Ser-102) is a Phosphoserine. Mn(2+)-binding residues include Asp-253 and Asn-254. Asp-253–Asn-254 serves as a coordination point for substrate. The S-adenosyl-L-methionine site is built by Glu-258 and Asp-291. Asp-291 serves as a coordination point for Mn(2+). Residues Asp-367–Arg-371 and Lys-404 each bind substrate. The short motif at Arg-401–Lys-404 is the Subfamily III RTxK motif element.

This sequence belongs to the damage-control phosphatase family. Sugar phosphate phosphatase III subfamily. The cofactor is Mn(2+). It depends on Ni(2+) as a cofactor. In terms of processing, automethylated.

The enzyme catalyses beta-D-fructose 1-phosphate + H2O = D-fructose + phosphate. It catalyses the reaction beta-D-fructose 6-phosphate = dihydroxyacetone + D-glyceraldehyde 3-phosphate. It carries out the reaction L-glutamyl-[protein] + S-adenosyl-L-methionine = [protein]-L-glutamate 5-O-methyl ester + S-adenosyl-L-homocysteine. Its function is as follows. Metal-dependent phosphatase that shows phosphatase activity against several substrates, including fructose-1-phosphate and fructose-6-phosphate. Its preference for fructose-1-phosphate, a strong glycating agent that causes DNA damage rather than a canonical yeast metabolite, suggests a damage-control function in hexose phosphate metabolism. Has also been shown to have O-methyltransferase activity that methylates glutamate residues of target proteins to form gamma-glutamyl methyl ester residues. Possibly methylates PCNA, suggesting it is involved in the DNA damage response. The sequence is that of Damage-control phosphatase ARMT1 from Homo sapiens (Human).